An 819-amino-acid chain; its full sequence is Sulfate permease 2 (819 aa).

The N-linked (GlcNAc...) asparagine glycan is linked to Asn24. A run of 10 helical transmembrane segments spans residues 72–92, 104–124, 129–149, 172–192, 194–214, 273–293, 328–348, 365–385, 454–474, and 477–497; these read YNLT…FVVV, LAPE…WAFA, ITIG…ANVQ, LLFL…IVAI, AFMT…LMGI, FFVS…VSWL, ILSA…IEHI, SQEL…GGYP, FWLT…VSIF, and IENG…WRIA. In terms of domain architecture, STAS spans 551-708; it reads ELQISTPWPG…ENHKGGVQEV (158 aa). Asn581 carries an N-linked (GlcNAc...) asparagine glycan. The interval 726–766 is disordered; it reads EAVPVGTSGSGSTDEKRPEGEGGATNGGMEKGSANGEDIST. The segment covering 746 to 755 has biased composition (gly residues); the sequence is EGGATNGGME.

It belongs to the SLC26A/SulP transporter (TC 2.A.53) family. As to expression, mainly found in mycelia.

Its subcellular location is the membrane. In terms of biological role, uptake of sulfate into the cell. The sequence is that of Sulfate permease 2 (cys-14) from Neurospora crassa (strain ATCC 24698 / 74-OR23-1A / CBS 708.71 / DSM 1257 / FGSC 987).